The following is an 87-amino-acid chain: MANTRSAKKMVRKIAARTDVNKARRSRVRTYVRKVEEAIASGDKPAAQEALKAAQPEIMRSVTKGVTHKNTASRKVSRLSARVKAMA.

Residues 1 to 15 (MANTRSAKKMVRKIA) are compositionally biased toward basic residues. 2 disordered regions span residues 1–22 (MANTRSAKKMVRKIAARTDVNK) and 64–87 (KGVTHKNTASRKVSRLSARVKAMA).

Belongs to the bacterial ribosomal protein bS20 family.

In terms of biological role, binds directly to 16S ribosomal RNA. The protein is Small ribosomal subunit protein bS20 of Hyphomonas neptunium (strain ATCC 15444).